Consider the following 254-residue polypeptide: Leucyl/phenylalanyl-tRNA--protein transferase (254 aa).

It belongs to the L/F-transferase family.

It is found in the cytoplasm. It catalyses the reaction N-terminal L-lysyl-[protein] + L-leucyl-tRNA(Leu) = N-terminal L-leucyl-L-lysyl-[protein] + tRNA(Leu) + H(+). It carries out the reaction N-terminal L-arginyl-[protein] + L-leucyl-tRNA(Leu) = N-terminal L-leucyl-L-arginyl-[protein] + tRNA(Leu) + H(+). The enzyme catalyses L-phenylalanyl-tRNA(Phe) + an N-terminal L-alpha-aminoacyl-[protein] = an N-terminal L-phenylalanyl-L-alpha-aminoacyl-[protein] + tRNA(Phe). Functionally, functions in the N-end rule pathway of protein degradation where it conjugates Leu, Phe and, less efficiently, Met from aminoacyl-tRNAs to the N-termini of proteins containing an N-terminal arginine or lysine. This Burkholderia cenocepacia (strain ATCC BAA-245 / DSM 16553 / LMG 16656 / NCTC 13227 / J2315 / CF5610) (Burkholderia cepacia (strain J2315)) protein is Leucyl/phenylalanyl-tRNA--protein transferase.